Consider the following 251-residue polypeptide: Electron transfer flavoprotein subunit beta, mitochondrial (251 aa).

The protein belongs to the ETF beta-subunit/FixA family. As to quaternary structure, heterodimer of an alpha and a beta subunit. It depends on FAD as a cofactor. AMP is required as a cofactor.

Its subcellular location is the mitochondrion matrix. Functionally, the electron transfer flavoprotein serves as a specific electron acceptor for several dehydrogenases, including five acyl-CoA dehydrogenases, glutaryl-CoA and sarcosine dehydrogenase. It transfers the electrons to the main mitochondrial respiratory chain via ETF-ubiquinone oxidoreductase (ETF dehydrogenase). Involved in leucine catabolism and in phytol degradation. This is Electron transfer flavoprotein subunit beta, mitochondrial (ETFB) from Arabidopsis thaliana (Mouse-ear cress).